Consider the following 472-residue polypeptide: Zinc finger and BTB domain-containing protein 18.2 (472 aa).

Positions 24 to 91 (CDCTVLVGEA…MYEGKLEFSN (68 aa)) constitute a BTB domain. Over residues 127 to 149 (KIIDDGEKDDKPVDSEEHHEHSF) the composition is skewed to basic and acidic residues. 3 disordered regions span residues 127-155 (KIIDDGEKDDKPVDSEEHHEHSFDASQQK), 197-236 (AGKTKANDSSPSSPLSQRSANHTHPPSDRDGALDLSFKPM), and 269-334 (DLLS…LSTS). The segment covering 205 to 215 (SSPSSPLSQRS) has biased composition (low complexity). Polar residues predominate over residues 279 to 288 (AKSPKSQQVG). A compositionally biased stretch (basic and acidic residues) spans 309 to 319 (HTREDDLYQDR). 4 consecutive C2H2-type zinc fingers follow at residues 344-366 (CICPLCSKVFPSPHILQLHLSSH), 384-406 (PTCTICGKTFSCMYTLKRHERTH), 412-434 (FTCGQCGKSFQYSHNLSRHAVVH), and 440-463 (HACKWCERRFTQSGDLYRHIRKFH).

It belongs to the krueppel C2H2-type zinc-finger protein family. ZBTB18 subfamily.

The protein resides in the nucleus. Its function is as follows. Transcriptional repressor that plays a role in various developmental processes. Specifically binds the consensus DNA sequence 5'-[AC]ACATCTG[GT][AC]-3' which contains the E box core, and acts by recruiting chromatin remodeling multiprotein complexes. The chain is Zinc finger and BTB domain-containing protein 18.2 (zbtb18.2) from Xenopus laevis (African clawed frog).